The following is a 395-amino-acid chain: Pyruvate synthase subunit PorA (395 aa).

Heterotetramer of one alpha, one beta, one delta and one gamma chain.

It carries out the reaction 2 oxidized [2Fe-2S]-[ferredoxin] + pyruvate + CoA = 2 reduced [2Fe-2S]-[ferredoxin] + acetyl-CoA + CO2 + H(+). The protein is Pyruvate synthase subunit PorA (porA) of Pyrococcus abyssi (strain GE5 / Orsay).